The chain runs to 462 residues: tRNA(Ile)-lysidine synthase (462 aa).

Residue 27–32 (SGGPDS) coordinates ATP.

Belongs to the tRNA(Ile)-lysidine synthase family.

Its subcellular location is the cytoplasm. It carries out the reaction cytidine(34) in tRNA(Ile2) + L-lysine + ATP = lysidine(34) in tRNA(Ile2) + AMP + diphosphate + H(+). Functionally, ligates lysine onto the cytidine present at position 34 of the AUA codon-specific tRNA(Ile) that contains the anticodon CAU, in an ATP-dependent manner. Cytidine is converted to lysidine, thus changing the amino acid specificity of the tRNA from methionine to isoleucine. This chain is tRNA(Ile)-lysidine synthase, found in Clostridioides difficile (strain 630) (Peptoclostridium difficile).